A 399-amino-acid polypeptide reads, in one-letter code: 1-deoxy-D-xylulose 5-phosphate reductoisomerase (399 aa).

NADPH is bound by residues Thr10, Gly11, Ser12, Ile13, and Asn124. Residue Lys125 participates in 1-deoxy-D-xylulose 5-phosphate binding. NADPH is bound at residue Glu126. Mn(2+) is bound at residue Asp150. 4 residues coordinate 1-deoxy-D-xylulose 5-phosphate: Ser151, Glu152, Ser186, and His209. Glu152 serves as a coordination point for Mn(2+). NADPH is bound at residue Gly215. Residues Ser222, Asn227, Lys228, and Glu231 each coordinate 1-deoxy-D-xylulose 5-phosphate. Glu231 contributes to the Mn(2+) binding site.

The protein belongs to the DXR family. Mg(2+) serves as cofactor. Requires Mn(2+) as cofactor.

The enzyme catalyses 2-C-methyl-D-erythritol 4-phosphate + NADP(+) = 1-deoxy-D-xylulose 5-phosphate + NADPH + H(+). It functions in the pathway isoprenoid biosynthesis; isopentenyl diphosphate biosynthesis via DXP pathway; isopentenyl diphosphate from 1-deoxy-D-xylulose 5-phosphate: step 1/6. Functionally, catalyzes the NADPH-dependent rearrangement and reduction of 1-deoxy-D-xylulose-5-phosphate (DXP) to 2-C-methyl-D-erythritol 4-phosphate (MEP). This chain is 1-deoxy-D-xylulose 5-phosphate reductoisomerase, found in Psychromonas ingrahamii (strain DSM 17664 / CCUG 51855 / 37).